The primary structure comprises 367 residues: bZIP transcription factor 18 (367 aa).

The segment at 1-57 is disordered; sequence MEDPSNPQPNQSNLSQCPPLATAPTPAPVRGPYHRRAHSEVQFRLPEDLDLSEPFGG. Positions 38-47 are enriched in basic and acidic residues; sequence HSEVQFRLPE. The residue at position 70 (Ser70) is a Phosphoserine. Residues 79–124 form a disordered region; the sequence is SGSGSASDSAGPSAPRSDNPFSAENGGAEAGNSRPRHRHSLSVDGS. The span at 82–96 shows a compositional bias: low complexity; that stretch reads GSASDSAGPSAPRSD. The 64-residue stretch at 148–211 folds into the bZIP domain; the sequence is DPKRAKRIIA…TGLSSENTEL (64 aa). Residues 150-171 form a basic motif region; that stretch reads KRAKRIIANRQSAARSKERKAR. Residues 166 to 245 are a coiled coil; that stretch reads KERKARYILE…VERLKFATGE (80 aa). The segment at 176–190 is leucine-zipper; sequence LERKVQTLQTEATTL. 3 stretches are compositionally biased toward polar residues: residues 294–309, 317–328, and 354–367; these read QPNN…NPPT, ATSNAPAQSHSY, and FGRS…SSTM. Disordered regions lie at residues 294–330 and 343–367; these read QPNN…SYSE and LDIS…SSTM.

As to quaternary structure, interacts with NEAP1. Forms homodimer and heterodimer with bZIP34 and bZIP61. In terms of tissue distribution, ubiquitous. Strongly expressed in mature pollen.

Its subcellular location is the nucleus. The protein resides in the nucleoplasm. It localises to the cytoplasm. The protein localises to the perinuclear region. Transcription factor that may participate with bZIP34 in the gametophytic control of pollen development. The protein is bZIP transcription factor 18 of Arabidopsis thaliana (Mouse-ear cress).